A 138-amino-acid chain; its full sequence is ATP synthase epsilon chain, chloroplastic (138 aa).

It belongs to the ATPase epsilon chain family. As to quaternary structure, F-type ATPases have 2 components, CF(1) - the catalytic core - and CF(0) - the membrane proton channel. CF(1) has five subunits: alpha(3), beta(3), gamma(1), delta(1), epsilon(1). CF(0) has three main subunits: a, b and c.

It is found in the plastid. The protein localises to the chloroplast thylakoid membrane. Produces ATP from ADP in the presence of a proton gradient across the membrane. The sequence is that of ATP synthase epsilon chain, chloroplastic from Huperzia lucidula (Shining clubmoss).